Here is a 201-residue protein sequence, read N- to C-terminus: Putative manganese efflux pump MntP (201 aa).

5 helical membrane passes run 6–26, 39–59, 105–125, 127–147, and 169–189; these read CLAV…ATGI, LAFH…TLGL, LTLI…GLSL, VLGI…LLFT, and LAGG…HGVF.

It belongs to the MntP (TC 9.B.29) family.

The protein resides in the cell inner membrane. Probably functions as a manganese efflux pump. The chain is Putative manganese efflux pump MntP from Nitratidesulfovibrio vulgaris (strain ATCC 29579 / DSM 644 / CCUG 34227 / NCIMB 8303 / VKM B-1760 / Hildenborough) (Desulfovibrio vulgaris).